We begin with the raw amino-acid sequence, 339 residues long: uncharacterized protein (339 aa).

The protein to bacterial alkanal monooxygenase alpha and beta chains.

This is an uncharacterized protein from Bacillus subtilis (strain 168).